Reading from the N-terminus, the 775-residue chain is Lon protease (775 aa).

The region spanning 6–207 (LPLMALRDIV…TIINILTSNI (202 aa)) is the Lon N-terminal domain. 356-363 (GPPGVGKT) lines the ATP pocket. The Lon proteolytic domain occupies 592 to 773 (NDQIGSTTGL…DQVLEHALTK (182 aa)). Active-site residues include S679 and K722.

The protein belongs to the peptidase S16 family. As to quaternary structure, homohexamer. Organized in a ring with a central cavity.

Its subcellular location is the cytoplasm. It carries out the reaction Hydrolysis of proteins in presence of ATP.. ATP-dependent serine protease that mediates the selective degradation of mutant and abnormal proteins as well as certain short-lived regulatory proteins. Required for cellular homeostasis and for survival from DNA damage and developmental changes induced by stress. Degrades polypeptides processively to yield small peptide fragments that are 5 to 10 amino acids long. Binds to DNA in a double-stranded, site-specific manner. This chain is Lon protease, found in Rickettsia bellii (strain RML369-C).